The sequence spans 278 residues: Proteolipid protein DM beta (278 aa).

The next 4 membrane-spanning stretches (helical) occupy residues 30–46 (LIAT…FCGC), 84–100 (VIYG…ILLM), 130–146 (FIML…GVTA), and 213–229 (LFIV…IAMV).

It belongs to the myelin proteolipid protein family.

Its subcellular location is the membrane. In Squalus acanthias (Spiny dogfish), this protein is Proteolipid protein DM beta.